The primary structure comprises 331 residues: Adenosine deaminase (331 aa).

Zn(2+) contacts are provided by His12 and His14. Substrate is bound by residues His14, Asp16, and Gly170. Residue His197 participates in Zn(2+) binding. The Proton donor role is filled by Glu200. Asp278 lines the Zn(2+) pocket. Asp279 serves as a coordination point for substrate.

This sequence belongs to the metallo-dependent hydrolases superfamily. Adenosine and AMP deaminases family. Adenosine deaminase subfamily. The cofactor is Zn(2+).

The catalysed reaction is adenosine + H2O + H(+) = inosine + NH4(+). The enzyme catalyses 2'-deoxyadenosine + H2O + H(+) = 2'-deoxyinosine + NH4(+). Catalyzes the hydrolytic deamination of adenosine and 2-deoxyadenosine. The polypeptide is Adenosine deaminase (Shewanella putrefaciens (strain CN-32 / ATCC BAA-453)).